We begin with the raw amino-acid sequence, 345 residues long: Transcription factor 19 (345 aa).

In terms of domain architecture, FHA spans 31 to 88 (YRLGHRADLCDVALRPQQEPGLISGIHAELHAEPRGDDWRVSLEDHSSQGTLVNNVRL). Ser78 bears the Phosphoserine mark. Residues 190–227 (LTFSPSWGGPKSLPVPAPPGEMGTTPSAPPQRNRRKSV) are disordered. The segment at 293–342 (AAPCCCLPQEETVAWVQCDGCDVWFHVACVGCSIQAAREADFRCPGCRAG) adopts a PHD-type zinc-finger fold. Zn(2+) contacts are provided by Cys296, Cys298, Cys310, Cys313, His318, Cys321, Cys336, and Cys339.

It is found in the nucleus. Potential transcription factor that may play a role in the regulation of genes involved in cell cycle G1/S transition. May bind to regulatory elements of genes, including the promoter of the transcription factor FOXO1. The polypeptide is Transcription factor 19 (TCF19) (Homo sapiens (Human)).